Reading from the N-terminus, the 376-residue chain is Pyrimidine monooxygenase RutA (376 aa).

FMN contacts are provided by residues 61–62 (IK), N127, E136, 152–153 (RY), and S202.

The protein belongs to the NtaA/SnaA/DszA monooxygenase family. RutA subfamily.

It catalyses the reaction uracil + FMNH2 + NADH + O2 = (Z)-3-ureidoacrylate + FMN + NAD(+) + H2O + H(+). The enzyme catalyses thymine + FMNH2 + NADH + O2 = (Z)-2-methylureidoacrylate + FMN + NAD(+) + H2O + H(+). In terms of biological role, catalyzes the pyrimidine ring opening between N-3 and C-4 by an unusual flavin hydroperoxide-catalyzed mechanism, adding oxygen atoms in the process to yield ureidoacrylate peracid, that immediately reacts with FMN forming ureidoacrylate and FMN-N(5)-oxide. The FMN-N(5)-oxide reacts spontaneously with NADH to produce FMN. Requires the flavin reductase RutF to regenerate FMN in vivo. The sequence is that of Pyrimidine monooxygenase RutA from Methylorubrum extorquens (strain CM4 / NCIMB 13688) (Methylobacterium extorquens).